The following is a 190-amino-acid chain: Large ribosomal subunit protein bL25 (190 aa).

Residues 1–20 are disordered; it reads MSEQKTLSVQKRDNLGKGAN.

It belongs to the bacterial ribosomal protein bL25 family. CTC subfamily. As to quaternary structure, part of the 50S ribosomal subunit; part of the 5S rRNA/L5/L18/L25 subcomplex. Contacts the 5S rRNA. Binds to the 5S rRNA independently of L5 and L18.

This is one of the proteins that binds to the 5S RNA in the ribosome where it forms part of the central protuberance. This chain is Large ribosomal subunit protein bL25, found in Nitratidesulfovibrio vulgaris (strain ATCC 29579 / DSM 644 / CCUG 34227 / NCIMB 8303 / VKM B-1760 / Hildenborough) (Desulfovibrio vulgaris).